A 66-amino-acid polypeptide reads, in one-letter code: SPbeta prophage-derived uncharacterized protein YosK (66 aa).

The protein is SPbeta prophage-derived uncharacterized protein YosK (yosK) of Bacillus subtilis (strain 168).